A 257-amino-acid chain; its full sequence is Enterotoxin type A (257 aa).

Residues 1-27 (MKKTAFILLLFIALTWTTSPLVNGSEK) form the signal peptide. Cys-120 and Cys-130 are joined by a disulfide. Positions 211, 249, and 251 each coordinate Zn(2+).

Belongs to the staphylococcal/streptococcal toxin family. Monomer. Interacts with MHC class II molecules alpha/HLA-DRB1 and beta/HLA-DRA chains. The interaction with MHC-II molecules occurs at both zinc-dependent and zinc-independent sites. Interacts with T-cell receptor beta variable 7-9/TRBV7-9. Requires Zn(2+) as cofactor.

The protein localises to the secreted. Staphylococcal enterotoxin that activates the host immune system by binding as unprocessed molecules to major histocompatibility (MHC) complex class II and T-cell receptor (TCR) molecules. In turn, waves of cellular activation, cytokine production, and migration into the lung tissue and airways occur via alphabeta T-cells. Also causes the intoxication staphylococcal food poisoning syndrome. The illness is characterized by high fever, hypotension, diarrhea, shock, and in some cases death. In Staphylococcus aureus (strain Newman), this protein is Enterotoxin type A (sea).